We begin with the raw amino-acid sequence, 227 residues long: MTVIAPVITIDGPSGAGKGTLCKALAETLQWHLLDSGAIYRVLVLAALHHQVAIDSEEALVPLATHLDVRFEVEQGKLSVVLEGEDVSQAIRNETVGNTASQIAAFPRVREALLRRQRAFRAAPGLIADGRDMGTVVFPDAPVKIFLDASSDERAYRRMRQLQEKGFSVNFERLLSEIKERDDRDRNRAVAPLVPAADALVLDSTRLTIDEVIAKALAHARQILALS.

ATP is bound at residue 12–20 (GPSGAGKGT).

This sequence belongs to the cytidylate kinase family. Type 1 subfamily.

It is found in the cytoplasm. It carries out the reaction CMP + ATP = CDP + ADP. The enzyme catalyses dCMP + ATP = dCDP + ADP. This is Cytidylate kinase from Sodalis glossinidius (strain morsitans).